The primary structure comprises 91 residues: Acylphosphatase (91 aa).

The Acylphosphatase-like domain maps to 3-91 (CLRAIVKGKV…ANYSDFRIKH (89 aa)). Active-site residues include Arg18 and Asn36.

It belongs to the acylphosphatase family.

The catalysed reaction is an acyl phosphate + H2O = a carboxylate + phosphate + H(+). This Dehalococcoides mccartyi (strain ATCC BAA-2100 / JCM 16839 / KCTC 5957 / BAV1) protein is Acylphosphatase (acyP).